The sequence spans 154 residues: Xanthine-guanine phosphoribosyltransferase (154 aa).

Residues 38–39, Lys-71, and 90–98 each bind 5-phospho-alpha-D-ribose 1-diphosphate; these read RG and DDLVDTGGT. Lys-71 lines the GMP pocket. Asp-91 is a binding site for Mg(2+). Positions 94 and 137 each coordinate guanine. The xanthine site is built by Asp-94 and Ile-137. Residues 94-98 and 136-137 each bind GMP; these read DTGGT and WI.

Belongs to the purine/pyrimidine phosphoribosyltransferase family. XGPT subfamily. In terms of assembly, homotetramer. Mg(2+) is required as a cofactor.

It is found in the cell inner membrane. It carries out the reaction GMP + diphosphate = guanine + 5-phospho-alpha-D-ribose 1-diphosphate. The catalysed reaction is XMP + diphosphate = xanthine + 5-phospho-alpha-D-ribose 1-diphosphate. It catalyses the reaction IMP + diphosphate = hypoxanthine + 5-phospho-alpha-D-ribose 1-diphosphate. The protein operates within purine metabolism; GMP biosynthesis via salvage pathway; GMP from guanine: step 1/1. It participates in purine metabolism; XMP biosynthesis via salvage pathway; XMP from xanthine: step 1/1. In terms of biological role, purine salvage pathway enzyme that catalyzes the transfer of the ribosyl-5-phosphate group from 5-phospho-alpha-D-ribose 1-diphosphate (PRPP) to the N9 position of the 6-oxopurines guanine and xanthine to form the corresponding ribonucleotides GMP (guanosine 5'-monophosphate) and XMP (xanthosine 5'-monophosphate), with the release of PPi. To a lesser extent, also acts on hypoxanthine. In Buchnera aphidicola subsp. Schizaphis graminum (strain Sg), this protein is Xanthine-guanine phosphoribosyltransferase.